The primary structure comprises 283 residues: Pantothenate synthetase (283 aa).

Residue 30–37 (MGNLHAGH) coordinates ATP. The active-site Proton donor is histidine 37. Glutamine 61 provides a ligand contact to (R)-pantoate. Glutamine 61 lines the beta-alanine pocket. 149–152 (GRKD) contributes to the ATP binding site. Position 155 (glutamine 155) interacts with (R)-pantoate. 186–189 (LSSR) serves as a coordination point for ATP.

It belongs to the pantothenate synthetase family. As to quaternary structure, homodimer.

Its subcellular location is the cytoplasm. The enzyme catalyses (R)-pantoate + beta-alanine + ATP = (R)-pantothenate + AMP + diphosphate + H(+). It functions in the pathway cofactor biosynthesis; (R)-pantothenate biosynthesis; (R)-pantothenate from (R)-pantoate and beta-alanine: step 1/1. Catalyzes the condensation of pantoate with beta-alanine in an ATP-dependent reaction via a pantoyl-adenylate intermediate. The chain is Pantothenate synthetase from Chromohalobacter salexigens (strain ATCC BAA-138 / DSM 3043 / CIP 106854 / NCIMB 13768 / 1H11).